Here is a 494-residue protein sequence, read N- to C-terminus: Splicing regulatory glutamine/lysine-rich protein 1 (494 aa).

The region spanning 69–145 (RTVYVGNLNS…RPLKINHSNN (77 aa)) is the RRM domain. Ser174 and Ser187 each carry phosphoserine. The tract at residues 176–494 (ISAAIEPESG…ESPCSKADAV (319 aa)) is disordered. Positions 183–192 (ESGKSNERKG) are enriched in basic and acidic residues. Over residues 193 to 262 (GRSRSHTRSK…KSRSRSRSRD (70 aa)) the composition is skewed to basic residues. A compositionally biased stretch (basic and acidic residues) spans 263-340 (KRKDTREKVK…DRSKETDEKR (78 aa)). Thr348 is subject to Phosphothreonine. Positions 357–373 (RRSRSTSRERRRRRSRS) are enriched in basic residues. The span at 404 to 474 (REKERDHISD…SPRTEDEGKV (71 aa)) shows a compositional bias: basic and acidic residues. Residues 476-486 (HNGNCQPNEES) are compositionally biased toward polar residues. Lys490 participates in a covalent cross-link: Glycyl lysine isopeptide (Lys-Gly) (interchain with G-Cter in SUMO2).

The protein belongs to the splicing factor SR family. In terms of assembly, homodimer. Binds SFRS1, SFRS2, SFRS3 and SFRS6. Interacts with the spliceosome. Interacts with SREK1IP1.

It localises to the nucleus. Functionally, participates in the regulation of alternative splicing by modulating the activity of other splice facors. Inhibits the splicing activity of SFRS1, SFRS2 and SFRS6. Augments the splicing activity of SFRS3. In Mus musculus (Mouse), this protein is Splicing regulatory glutamine/lysine-rich protein 1 (Srek1).